Consider the following 142-residue polypeptide: Large ribosomal subunit protein uL11 (142 aa).

Belongs to the universal ribosomal protein uL11 family. Part of the ribosomal stalk of the 50S ribosomal subunit. Interacts with L10 and the large rRNA to form the base of the stalk. L10 forms an elongated spine to which L12 dimers bind in a sequential fashion forming a multimeric L10(L12)X complex. In terms of processing, one or more lysine residues are methylated.

In terms of biological role, forms part of the ribosomal stalk which helps the ribosome interact with GTP-bound translation factors. This chain is Large ribosomal subunit protein uL11, found in Stenotrophomonas maltophilia (strain R551-3).